The primary structure comprises 357 residues: MSLTRLLIKDFRNIENADLALSPGFNFLVGANGSGKTSVLEAIYTLGHGRAFRSLQIGRVIRHEQDAFILHGRLQGDEREVSVGLTKDRNGDSTVRIDGSDGHKVAELAQLMPMQLITPEGFTLLGGGPKYRRAFLDWGCFHNEPGFFVAWSNLKRLLKQRNAALRQVTRYEQLRPWDRELVPLAEQISQWRASYSEAIANDMADTCAQFLPEFSLTFSFQRGWEKESDYADVLERGFERDRMLTYTAHGPHKADFRIRADGAPVEDTLSRGQLKLLMCALRLAQGEFLTRESGRRCLYLIDDFASELDDARRGLLAQRLKATQSQVFVSAISAEHILDMTDKNSKMFAVDQGKITD.

30–37 (GANGSGKT) contributes to the ATP binding site.

Belongs to the RecF family.

Its subcellular location is the cytoplasm. In terms of biological role, the RecF protein is involved in DNA metabolism; it is required for DNA replication and normal SOS inducibility. RecF binds preferentially to single-stranded, linear DNA. It also seems to bind ATP. The polypeptide is DNA replication and repair protein RecF (Cronobacter sakazakii (strain ATCC BAA-894) (Enterobacter sakazakii)).